Consider the following 956-residue polypeptide: MSFTPTDYNAYDFANRRHIGPSPSEMEEMLRVVGVSSLDQLIEETVPASIRQETPLDWAPLAEHELLARMREVAAKNRVMTSLIGQGYYGTVTPPAIQRNILENPAWYTAYTPYQPEIAQGRLEALLNYQTMVADLTGLPVANASLLDEATAAAEAMTMAERASKSKARAFFVDADCHPQTISVIRTRAEPLGIEVIVGHPAQLVPEDVFGALFQYPGTYGLVRDFTRDIAALHEAKALAVVATDLLALCLLKEPGAMGADIAIGSSQRFGVPMGYGGPHAAFMSCKDDLKRSMPGRLVGVSVDARGNKAYRLALQTREQHIRREKATSNVCTAQALLAVMASFYAVFHGPRGLRAIAERVHLNTVRLATALKEAGARVSPEAFFDTITVEVGVGQAGILAAARHRGINLRKVGRDRVGISLDETTDAGVIARVLDAFGIHEPAPAKVGLGFPEPLLRETGYLSHPVFQMNRAESEMMRYMRRLSDRDLALDRAMIPLGSCTMKLNAAAEMMPITWPEFGTLHPFAPADQAAGYHEAIGDLAQRLCRITGYDAMSMQPNSGAQGEYAGLLTILAYHRARGDAERTICLIPVSAHGTNPASAQMAGMKVVVVKSAPNGDVDLEDFRDKAAAAGDRLAACMITYPSTHGVFEETVREVCRITHEHGGQVYIDGANMNAMVGLVQPGAIGGDVSHLNLHKTFAIPHGGGGPGMGPIGVKAHLAPYLPGHPEVTGPLTGGHDEAADEGPVSAAPYGSASILLISWAYCLMMGGEGLTQATRVAILNANYIAARLRGAYKVLFMGNRGRVAHECILDTRPFAEAGVTVDDIAKRLIDNGFHAPTMSWPVPGTLMVEPTESETKAEIDRFVAALLAIREEIRAVEEGEIAAADSPLRHAPHTVEDLVADWDRKYPREQGCFPPGSFRVDKYWPPVGRVDNAWGDRNLVCTCPPVESYSIAAQ.

At Lys697 the chain carries N6-(pyridoxal phosphate)lysine.

This sequence belongs to the GcvP family. As to quaternary structure, the glycine cleavage system is composed of four proteins: P, T, L and H. Requires pyridoxal 5'-phosphate as cofactor.

It catalyses the reaction N(6)-[(R)-lipoyl]-L-lysyl-[glycine-cleavage complex H protein] + glycine + H(+) = N(6)-[(R)-S(8)-aminomethyldihydrolipoyl]-L-lysyl-[glycine-cleavage complex H protein] + CO2. Its function is as follows. The glycine cleavage system catalyzes the degradation of glycine. The P protein binds the alpha-amino group of glycine through its pyridoxal phosphate cofactor; CO(2) is released and the remaining methylamine moiety is then transferred to the lipoamide cofactor of the H protein. This Cereibacter sphaeroides (strain KD131 / KCTC 12085) (Rhodobacter sphaeroides) protein is Glycine dehydrogenase (decarboxylating).